The primary structure comprises 522 residues: Sterol O-acyltransferase 2 (522 aa).

2 disordered regions span residues 1-36 (MEPGGARLRLQRTEGLGGERERQPCGDGNTETHRAP) and 74-96 (SYPSQDKPLPPPPPGSLSRTQEP). The Cytoplasmic segment spans residues 1-120 (MEPGGARLRL…LDELMEVQHF (120 aa)). Basic and acidic residues predominate over residues 17-36 (GGERERQPCGDGNTETHRAP). Residue His-119 participates in cholesterol binding. Residues 121-142 (RTIYHMFIAGLCVFIISTLAID) form a helical membrane-spanning segment. At 143–162 (FIDEGRLLLEFDLLIFSFGQ) the chain is on the lumenal side. Residues 163 to 188 (LPLALVTWVPMFLSTLLAPYQALRLW) traverse the membrane as a helical segment. The Cytoplasmic segment spans residues 189 to 196 (ARGTWTQA). Residues 197–220 (TGLGCALLAAHAVVLCALPVHVAV) traverse the membrane as a helical segment. Residues 221-228 (EHQLPPAS) lie on the Lumenal side of the membrane. Residues 229-252 (RCVLVFEQVRFLMKSYSFLREAVP) form a helical membrane-spanning segment. Over 253 to 293 (GTLRARRGEGIQAPSFSSYLYFLFCPTLIYRETYPRTPYVR) the chain is Cytoplasmic. At Cys-277 the chain carries Cysteine sulfenic acid (-SOH); alternate. Cys-277 participates in a covalent cross-link: Glycyl cysteine thioester (Cys-Gly) (interchain with G-Cter in ubiquitin); alternate. A helical membrane pass occupies residues 294-326 (WNYVAKNFAQALGCVLYACFILGRLCVPVFANM). Residues 327 to 343 (SREPFSTRALVLSILHA) lie on the Lumenal side of the membrane. A helical transmembrane segment spans residues 344-369 (TLPGIFMLLLIFFAFLHCWLNAFAEM). Topologically, residues 370 to 417 (LRFGDRMFYRDWWNSTSFSNYYRTWNVVVHDWLYSYVYQDGLRLLGAR) are cytoplasmic. Positions 377–383 (FYRDWWN) match the FYXDWWN motif motif. An acyl-CoA-binding residues include Asn-389, Arg-392, Asn-395, His-399, Tyr-407, and Ser-430. The helical transmembrane segment at 418 to 442 (ARGVAMLGVFLVSAVAHEYIFCFVL) threads the bilayer. Residue His-434 is part of the active site. Residues 443 to 448 (GFFYPV) lie on the Lumenal side of the membrane. A helical membrane pass occupies residues 449-464 (MLILFLVIGGMLNFMM). Topologically, residues 465–470 (HDQRTG) are cytoplasmic. The chain crosses the membrane as a helical span at residues 471–502 (PAWNVLMWTMLFLGQGIQVSLYCQEWYARRHC). Topologically, residues 503 to 522 (PLPQATFWGLVTPRSWSCHT) are lumenal.

Belongs to the membrane-bound acyltransferase family. Sterol o-acyltransferase subfamily. May form homo- or heterodimers. Interacts with INSIG1; the interaction is direct and promotes association with AMFR/gp78. Post-translationally, polyubiquitinated by AMFR/gp78 at Cys-277, leading to its degradation when the lipid levels are low. Association with AMFR/gp78 is mediated via interaction with INSIG1. High concentration of cholesterol and fatty acid results in Cys-277 oxidation, preventing ubiquitination at the same site, resulting in protein stabilization. Oxidized at Cys-277: high concentration of cholesterol and fatty acid induce reactive oxygen species, which oxidizes Cys-277, preventing ubiquitination at the same site, and resulting in protein stabilization. In terms of tissue distribution, expression seems confined in hepatocytes and enterocytes.

Its subcellular location is the endoplasmic reticulum membrane. It catalyses the reaction a sterol + a long-chain fatty acyl-CoA = a long-chain 3-hydroxysterol ester + CoA. The enzyme catalyses cholesterol + an acyl-CoA = a cholesterol ester + CoA. The catalysed reaction is cholesterol + (9Z)-octadecenoyl-CoA = cholesteryl (9Z-octadecenoate) + CoA. It carries out the reaction (5Z,8Z,11Z,14Z,17Z)-eicosapentaenoyl-CoA + cholesterol = (5Z,8Z,11Z,14Z,17Z-eicosapentaenoyl)-cholesterol + CoA. It catalyses the reaction (9Z,12Z,15Z)-octadecatrienoyl-CoA + cholesterol = (9Z,12Z,15Z-octadecatrienoyl)-cholesterol + CoA. The enzyme catalyses (5Z,8Z,11Z,14Z)-eicosatetraenoyl-CoA + cholesterol = cholesteryl (5Z,8Z,11Z,14Z)-eicosatetraenoate + CoA. Functionally, catalyzes the formation of fatty acid-cholesterol esters, which are less soluble in membranes than cholesterol. Plays a role in lipoprotein assembly and dietary cholesterol absorption. Utilizes oleoyl-CoA ((9Z)-octadecenoyl-CoA) and linolenoyl-CoA ((9Z,12Z,15Z)-octadecatrienoyl-CoA) as substrates. May provide cholesteryl esters for lipoprotein secretion from hepatocytes and intestinal mucosa. In terms of biological role, has lower enzymatic activity compared to isoform 1. In Homo sapiens (Human), this protein is Sterol O-acyltransferase 2.